The following is a 201-amino-acid chain: Small ribosomal subunit protein uS5 (201 aa).

Residues 1–28 (MAGPQRRGSGAGGGERRDRKGRDGGASA) form a disordered region. Basic and acidic residues predominate over residues 14-23 (GERRDRKGRD). The S5 DRBM domain occupies 34-97 (YVERVVAINR…EEAKKNFFKV (64 aa)).

The protein belongs to the universal ribosomal protein uS5 family. As to quaternary structure, part of the 30S ribosomal subunit. Contacts proteins S4 and S8.

With S4 and S12 plays an important role in translational accuracy. Functionally, located at the back of the 30S subunit body where it stabilizes the conformation of the head with respect to the body. The sequence is that of Small ribosomal subunit protein uS5 from Streptomyces griseus subsp. griseus (strain JCM 4626 / CBS 651.72 / NBRC 13350 / KCC S-0626 / ISP 5235).